The chain runs to 123 residues: uncharacterized protein (123 aa).

A helical membrane pass occupies residues 1-21 (MHIIAKSILLMAVSFLVIIFT).

Its subcellular location is the membrane. This is an uncharacterized protein from Methanocaldococcus jannaschii (strain ATCC 43067 / DSM 2661 / JAL-1 / JCM 10045 / NBRC 100440) (Methanococcus jannaschii).